The chain runs to 525 residues: Histidine-rich glycoprotein (525 aa).

The signal sequence occupies residues 1–18 (MKVLTTALLLVTLQCSHA). The 104-residue stretch at 19-122 (LSPTNCDASK…ESQDLSVNGY (104 aa)) folds into the Cystatin 1 domain. Disulfide bonds link cysteine 24/cysteine 504, cysteine 78/cysteine 89, cysteine 103/cysteine 124, cysteine 201/cysteine 414, and cysteine 216/cysteine 239. The segment at 41–84 (GRRSGYTFQLLRVSDAHLDRVETATIYYLVLDVVESDCWVLSTK) is interaction with ATP5F1A. Asparagine 112 and asparagine 123 each carry an N-linked (GlcNAc...) asparagine glycan. The 106-residue stretch at 135-240 (NTKDSPVLVD…TPEYTDLICE (106 aa)) folds into the Cystatin 2 domain. Residue serine 145 is modified to Phosphoserine. An N-linked (GlcNAc...) asparagine glycan is attached at asparagine 200. A disordered region spans residues 275-445 (RDHHHTHKTH…GHSRKRGPGK (171 aa)). Residues asparagine 322 and asparagine 330 are each glycosylated (N-linked (GlcNAc...) asparagine). Basic residues-rich tracts occupy residues 339-392 (HGQH…HGHH) and 426-443 (QYHR…KRGP). Residue serine 438 is modified to Phosphoserine.

Interacts with THBS1 (via the TSP type I repeats); the interaction blocks the antiangiogenic effect of THBS1 with CD36. Interacts with HPSE; the interaction is enhanced at acidic pH, partially inhibits binding of HPSE to cell surface receptors and modulates its enzymatic activity. Interacts (via the HRR domain) with TMP1; the interaction partially mediates the antiangiogenic properties of HRG. Interacts with kappa and lambda light chains of IgG molecules. Interacts with ATP5F1A; the interaction occurs on the surface of T-cells and alters their cell morphology in concert with CONA. Binds IgG molecules containing kappa and lambda light chains and inhibits the formation of insoluble immunoglobulin complexes. Interacts with F12; the interaction, which is enhanced in the presence of zinc ions and inhibited by heparin-binding to HRG, inhibits factor XII autoactivation and contact-initiated coagulation. Interacts with PLG (via its Kringle domains); the interaction tethers PLG to the cell surface and enhances its activation. Interacts (via the HRR domain) with TPM1; the interaction appears to contribute to the antiangiogenic properties of the HRR domain. Interacts with THBS2; the interaction blocks the antiangiogenic effect of THBS2 with CD36. Post-translationally, N-glycosylated. Proteolytic cleavage produces several HRG fragments which are mostly disulfide-linked and, therefore, not released. Cleavage by plasmin is inhibited in the presence of heparin, zinc ions or in an acidic environment. Cleavage reduces binding of HRG to heparan sulfate, but enhances the ability of HRG to bind and tether plasminogen to the cell surface. On platelet activation, releases a 33 kDa antiangiogenic peptide which encompasses the HRR. Also cleaved in the C-terminal by plasmin. As to expression, expressed in liver, blood plasma, serum and in platelets. Also present in fibrin clots, wound fluid from acute wounds and chronic leg ulcers.

It is found in the secreted. In terms of biological role, plasma glycoprotein that binds a number of ligands such as heme, heparin, heparan sulfate, thrombospondin, plasminogen, and divalent metal ions. Inhibits rosette formation. Acts as an adapter protein and implicated in regulating many processes such as immune complex and pathogen clearance, cell adhesion, angiogenesis, coagulation and fibrinolysis. Mediates clearance of necrotic cells through enhancing the phagocytosis of necrotic cells in a heparan sulfate-dependent pathway. This process can be regulated by the presence of certain HRG ligands such as heparin and zinc ions. Binds to IgG subclasses of immunoglobins containing kappa and lambda light chains with different affinities regulating their clearance and inhibiting the formation of insoluble immune complexes. Tethers plasminogen to the cell surface. Binds T-cells and alters the cell morphology. Modulates angiogenesis by blocking the CD6-mediated antiangiongenic effect of thrombospondins, THBS1 and THBS2. This Rattus norvegicus (Rat) protein is Histidine-rich glycoprotein (Hrg).